We begin with the raw amino-acid sequence, 504 residues long: MEQYQAYLELRRSRYQDILYPLFFRESIYGLAYGHESFFTENVDYNNKFSLLIXQRXSTRMYQQTHFSLCANDSNKNTFVGYNYNFDSQIILEGFGVVVEILFSLQLFISSLRGLEIVKSYQNLQSIHSIFPFFEDKLIYLNHKSDIRIPYPIHLEIXXXXXXXXXXXXXFFHLIRLFFYYYYNWNSLFPPKKRISTFFSKRNLRIFLFLYNLYVWEYESIFLFLRNKCSQLQLKHFLVFFERIFFYEKRKHLVEVSTKTCSYTLFFFKDTFIHYVRYKGKSILVLKNTPLLINKWKYYFIYLWQCHFDIWAGPGTIYINQLSQXSFHFLGYFLSXXXXXXXXXXXXXXXXXXXXXXXXXXXXXXXXXXXXXXXXXXXXXXXXXXXXXXXXXANFSDFDILDRFLRICRNFSHYYNGSAKKKSFYQIKYILRFSCIKTLARKHKSTVRTFLKKLSSEKLLEEFFTEEDLFSLIFPRTSFTLRGVYRGRIWYLDIFFRNDFVNHF.

The protein belongs to the intron maturase 2 family. MatK subfamily.

Its subcellular location is the plastid. The protein localises to the chloroplast. Its function is as follows. Usually encoded in the trnK tRNA gene intron. Probably assists in splicing its own and other chloroplast group II introns. In Lablab purpureus (Hyacinth bean), this protein is Maturase K.